An 85-amino-acid chain; its full sequence is Small ribosomal subunit protein eS21 (85 aa).

The protein belongs to the eukaryotic ribosomal protein eS21 family. Component of the 40S small ribosomal subunit.

The protein resides in the cytoplasm. It is found in the cytosol. It localises to the rough endoplasmic reticulum. The chain is Small ribosomal subunit protein eS21 (rps-21) from Pectinaria gouldii (Trumpet worm).